The sequence spans 375 residues: Chaperone protein DnaJ (375 aa).

The J domain occupies 4-68; it reads DYYEILGVSR…ETRARYDRFG (65 aa). Residues 134-216 form a CR-type zinc finger; it reads GGEKEIRIRH…CGGSGRKQET (83 aa). Zn(2+)-binding residues include cysteine 147, cysteine 150, cysteine 164, cysteine 167, cysteine 190, cysteine 193, cysteine 204, and cysteine 207. CXXCXGXG motif repeat units follow at residues 147–154, 164–171, 190–197, and 204–211; these read CQVCEGSG, CSTCSGSG, CPTCNGSG, and CEACGGSG.

This sequence belongs to the DnaJ family. As to quaternary structure, homodimer. The cofactor is Zn(2+).

It localises to the cytoplasm. Participates actively in the response to hyperosmotic and heat shock by preventing the aggregation of stress-denatured proteins and by disaggregating proteins, also in an autonomous, DnaK-independent fashion. Unfolded proteins bind initially to DnaJ; upon interaction with the DnaJ-bound protein, DnaK hydrolyzes its bound ATP, resulting in the formation of a stable complex. GrpE releases ADP from DnaK; ATP binding to DnaK triggers the release of the substrate protein, thus completing the reaction cycle. Several rounds of ATP-dependent interactions between DnaJ, DnaK and GrpE are required for fully efficient folding. Also involved, together with DnaK and GrpE, in the DNA replication of plasmids through activation of initiation proteins. The polypeptide is Chaperone protein DnaJ (Gloeothece citriformis (strain PCC 7424) (Cyanothece sp. (strain PCC 7424))).